The primary structure comprises 358 residues: MDLQNKPQILEHLHKSLTVTLYDCRWIPGTAKFVTLGSYARNTGCLQVYELEGPDLKTVKETEKKHSFKCGTFGASSLAERRLATGNFGGEVQIWDLENTAQPVFTAQAHASIVNAIDGCGGQAKGYGAPELATCGRDGCVRVWDVRQQDAPVAAFEPADPNNVRDCWCVAFGNSFNDNERCLLAGYDNGDVKMFDLRMNKVRWETNVRNGVCGLQFDRKDISMNKFAVCCLEAQFHVFDARTQHPKKGFASVSEKITAGATVWGAQHLPQNREVFMVSAGDGNLYLYKYHYPDQRKVKDHDGQELGVAGSVEMLNYKNISTQPVAGFDWSPDKEGLFACVAFDQAVRVGIVTKLNKV.

WD repeat units follow at residues 63 to 105 (EKKH…QPVF), 109 to 154 (AHAS…APVA), 162 to 205 (NNVR…VRWE), 207 to 249 (NVRN…PKKG), 258 to 298 (TAGA…QRKV), and 320 to 358 (ISTQ…LNKV).

In terms of assembly, interacts with PIH1D1; the interaction associates DNAAF10 with the R2TP complex. Interacts with several dynein axonemal assembly factors.

The protein localises to the dynein axonemal particle. In terms of biological role, key assembly factor specifically required for the stability of axonemal dynein heavy chains in cytoplasm. The protein is Dynein axonemal assembly factor 10 (dnaaf10) of Chlamydomonas reinhardtii (Chlamydomonas smithii).